The sequence spans 280 residues: Thioredoxin-related transmembrane protein 1 (280 aa).

The first 26 residues, 1–26 (MAPSGSLAVPLAVLVLLLWGAPWTHG), serve as a signal peptide directing secretion. Positions 27-132 (RRSNVRVITD…FINFISDKEW (106 aa)) constitute a Thioredoxin domain. The Extracellular portion of the chain corresponds to 27 to 180 (RRSNVRVITD…EDLGLPVWGS (154 aa)). Catalysis depends on nucleophile residues C56 and C59. C56 and C59 are disulfide-bonded. The helical transmembrane segment at 181-203 (YTVFALATLFSGLLLGLCMIFVA) threads the bilayer. The Cytoplasmic portion of the chain corresponds to 204-280 (DCLCPSKRRR…LGPSLATDKS (77 aa)). 2 S-palmitoyl cysteine lipidation sites follow: C205 and C207. Residues 218 to 280 (PYPSKKLLSE…LGPSLATDKS (63 aa)) form a disordered region. Residues S228, S247, S270, S274, and S280 each carry the phosphoserine modification. Over residues 237-252 (EEQEADEEDVSEEEAE) the composition is skewed to acidic residues.

As to quaternary structure, interacts with ATP2A2. Post-translationally, palmitoylated; palmitoylation is required for localization to mitochondria-associated endoplasmic reticulum membrane (MAM). In terms of tissue distribution, ubiquitous. Highly expressed in kidney, liver, placenta and lung.

It is found in the endoplasmic reticulum membrane. Its subcellular location is the mitochondrion membrane. The protein resides in the secreted. The enzyme catalyses Catalyzes the rearrangement of -S-S- bonds in proteins.. Its function is as follows. Thiredoxin domain-containing protein that participates in various redox reactions through the reversible oxidation of its active center dithiol to a disulfide and catalyze dithiol-disulfide exchange reactions. Acts as a key inhibitor of the alternative triglyceride biosynthesis pathway by inhibiting the activity of TMEM68/DIESL at the endoplasmic reticulum, thereby restricting accumulation of triacylglycerol. The alternative triglyceride biosynthesis pathway mediates formation of triacylglycerol from diacylglycerol and membrane phospholipids. Acts as a protein disulfide isomerase by catalyzing formation or reduction of disulfide bonds. Specifically mediates formation of disulfide bonds of transmembrane proteins at the endoplasmic reticulum membrane. Involved in endoplasmic reticulum-associated degradation (ERAD) via its protein disulfide isomerase activity by acting on folding-defective polypeptides at the endoplasmic reticulum membrane. Acts as a negative regulator of platelet aggregation following secretion in the extracellular space. Acts as a regulator of endoplasmic reticulum-mitochondria contact sites via its ability to regulate redox signals. Regulates endoplasmic reticulum-mitochondria Ca(2+) flux. This chain is Thioredoxin-related transmembrane protein 1, found in Homo sapiens (Human).